The chain runs to 131 residues: Small capsomere-interacting protein (131 aa).

This sequence belongs to the herpesviridae small capsomere-interacting protein family. In terms of assembly, interacts with the major capsid protein/MCP.

Its subcellular location is the virion. It is found in the host nucleus. Functionally, participates in the assembly of the infectious particles by decorating the outer surface of the capsid shell and thus forming a layer between the capsid and the tegument. Complexes composed of the major capsid protein and small capsomere-interacting protein/SCP assemble together in the host cytoplasm and are translocated to the nucleus, where they accumulate and participate in capsid assembly. The chain is Small capsomere-interacting protein from Gallus gallus (Chicken).